A 206-amino-acid chain; its full sequence is Large ribosomal subunit protein bL9 (206 aa).

Residues 182–206 (FAENQQKALAKEMNDNDANSINEEA) form a disordered region. Polar residues predominate over residues 197-206 (NDANSINEEA).

The protein belongs to the bacterial ribosomal protein bL9 family.

Binds to the 23S rRNA. In Bartonella henselae (strain ATCC 49882 / DSM 28221 / CCUG 30454 / Houston 1) (Rochalimaea henselae), this protein is Large ribosomal subunit protein bL9.